The chain runs to 404 residues: Translation initiation factor eIF2B subunit gamma (404 aa).

This sequence belongs to the eIF-2B gamma/epsilon subunits family. In terms of assembly, component of the translation initiation factor 2B (eIF2B) complex which is a heterodecamer of two sets of five different subunits: alpha, beta, gamma, delta and epsilon. Subunits alpha, beta and delta comprise a regulatory subcomplex and subunits epsilon and gamma comprise a catalytic subcomplex. Within the complex, the hexameric regulatory complex resides at the center, with the two heterodimeric catalytic subcomplexes bound on opposite sides.

It is found in the cytoplasm. The protein localises to the cytosol. Acts as a component of the translation initiation factor 2B (eIF2B) complex, which catalyzes the exchange of GDP for GTP on the eukaryotic initiation factor 2 (eIF2) complex gamma subunit. Its guanine nucleotide exchange factor activity is repressed when bound to eIF2 complex phosphorylated on the alpha subunit, thereby limiting the amount of methionyl-initiator methionine tRNA available to the ribosome and consequently global translation is repressed. The sequence is that of Translation initiation factor eIF2B subunit gamma from Caenorhabditis elegans.